The primary structure comprises 338 residues: tRNA-specific 2-thiouridylase MnmA (338 aa).

ATP contacts are provided by residues 6-13 (AMSGGVDS) and M32. C92 serves as the catalytic Nucleophile. An intrachain disulfide couples C92 to C186. G116 provides a ligand contact to ATP. Residues 134-136 (KDQ) form an interaction with tRNA region. The active-site Cysteine persulfide intermediate is the C186. Positions 288–289 (RY) are interaction with tRNA.

Belongs to the MnmA/TRMU family.

Its subcellular location is the cytoplasm. It carries out the reaction S-sulfanyl-L-cysteinyl-[protein] + uridine(34) in tRNA + AH2 + ATP = 2-thiouridine(34) in tRNA + L-cysteinyl-[protein] + A + AMP + diphosphate + H(+). Its function is as follows. Catalyzes the 2-thiolation of uridine at the wobble position (U34) of tRNA, leading to the formation of s(2)U34. The chain is tRNA-specific 2-thiouridylase MnmA from Campylobacter jejuni subsp. jejuni serotype O:6 (strain 81116 / NCTC 11828).